Here is a 98-residue protein sequence, read N- to C-terminus: Mu-type opioid receptor (98 aa).

At 1–9 (YTKMKTATN) the chain is on the cytoplasmic side. A helical membrane pass occupies residues 10 to 34 (IYIFNLALADALATSTLPFQSVNYL). Topologically, residues 35–45 (MGTWPFGTILC) are extracellular. The chain crosses the membrane as a helical span at residues 46–68 (KIVISIDYYNMFTSIFTLCTMSV). At 69–88 (DRYIAVCHPVKALDFRTPRN) the chain is on the cytoplasmic side. Phosphotyrosine is present on Y71. The helical transmembrane segment at 89-98 (AKTVNVCNWI) threads the bilayer.

Belongs to the G-protein coupled receptor 1 family. As to quaternary structure, forms homooligomers and heterooligomers with other GPCRs, such as OPRD1, OPRK1, OPRL1, NPFFR2, ADRA2A, SSTR2, CNR1 and CCR5 (probably in dimeric forms). Interacts with heterotrimeric G proteins; interaction with a heterotrimeric complex containing GNAI1, GNB1 and GNG2 stabilizes the active conformation of the receptor and increases its affinity for endomorphin-2, the synthetic opioid peptide DAMGO and for morphinan agonists. Interacts with PPL; the interaction disrupts agonist-mediated G-protein activation. Interacts (via C-terminus) with DNAJB4 (via C-terminus). Interacts with calmodulin; the interaction inhibits the constitutive activity of OPRM1; it abolishes basal and attenuates agonist-stimulated G-protein coupling. Interacts with FLNA, PLD2, RANBP9 and WLS and GPM6A. Interacts with RTP4. Interacts with SYP and GNAS. Interacts with RGS9, RGS17, RGS20, RGS4, PPP1R9B and HINT1. Phosphorylated. Differentially phosphorylated in basal and agonist-induced conditions. Agonist-mediated phosphorylation modulates receptor internalization. Phosphorylated by GRK2 in a agonist-dependent manner. Phosphorylated on tyrosine residues; the phosphorylation is involved in agonist-induced G-protein-independent receptor down-regulation. Post-translationally, phosphorylated. Differentially phosphorylated in basal and agonist-induced conditions. Agonist-mediated phosphorylation modulates receptor internalization. Phosphorylated by GRK2 in a agonist-dependent manner. Phosphorylated on tyrosine residues; the phosphorylation is involved in agonist-induced G-protein-independent receptor down-regulation. In terms of processing, ubiquitinated. A basal ubiquitination seems not to be related to degradation. Ubiquitination is increased upon formation of OPRM1:OPRD1 oligomers leading to proteasomal degradation; the ubiquitination is diminished by RTP4.

It localises to the cell membrane. The protein localises to the cell projection. The protein resides in the axon. Its subcellular location is the perikaryon. It is found in the dendrite. It localises to the endosome. Functionally, receptor for endogenous opioids such as beta-endorphin and endomorphin. Receptor for natural and synthetic opioids including morphine, heroin, DAMGO, fentanyl, etorphine, buprenorphin and methadone. Also activated by enkephalin peptides, such as Met-enkephalin or Met-enkephalin-Arg-Phe, with higher affinity for Met-enkephalin-Arg-Phe. Agonist binding to the receptor induces coupling to an inactive GDP-bound heterotrimeric G-protein complex and subsequent exchange of GDP for GTP in the G-protein alpha subunit leading to dissociation of the G-protein complex with the free GTP-bound G-protein alpha and the G-protein beta-gamma dimer activating downstream cellular effectors. The agonist- and cell type-specific activity is predominantly coupled to pertussis toxin-sensitive G(i) and G(o) G alpha proteins, GNAI1, GNAI2, GNAI3 and GNAO1, and to a lesser extent to pertussis toxin-insensitive G alpha proteins GNAZ and GNA15. They mediate an array of downstream cellular responses, including inhibition of adenylate cyclase activity and both N-type and L-type calcium channels, activation of inward rectifying potassium channels, mitogen-activated protein kinase (MAPK), phospholipase C (PLC), phosphoinositide/protein kinase (PKC), phosphoinositide 3-kinase (PI3K) and regulation of NF-kappa-B. Also couples to adenylate cyclase stimulatory G alpha proteins. The selective temporal coupling to G-proteins and subsequent signaling can be regulated by RGSZ proteins, such as RGS9, RGS17 and RGS4. Phosphorylation by members of the GPRK subfamily of Ser/Thr protein kinases and association with beta-arrestins is involved in short-term receptor desensitization. Beta-arrestins associate with the GPRK-phosphorylated receptor and uncouple it from the G-protein thus terminating signal transduction. The phosphorylated receptor is internalized through endocytosis via clathrin-coated pits which involves beta-arrestins. The activation of the ERK pathway occurs either in a G-protein-dependent or a beta-arrestin-dependent manner and is regulated by agonist-specific receptor phosphorylation. Acts as a class A G-protein coupled receptor (GPCR) which dissociates from beta-arrestin at or near the plasma membrane and undergoes rapid recycling. Receptor down-regulation pathways are varying with the agonist and occur dependent or independent of G-protein coupling. Endogenous ligands induce rapid desensitization, endocytosis and recycling. Heterooligomerization with other GPCRs can modulate agonist binding, signaling and trafficking properties. Involved in neurogenesis. The chain is Mu-type opioid receptor (OPRM1) from Cavia porcellus (Guinea pig).